A 277-amino-acid chain; its full sequence is Caspase-3 (277 aa).

Met-1 carries the post-translational modification N-acetylmethionine. 2 propeptides span residues 1-9 (MENSENSVD) and 10-28 (AKSI…KSMD). Lys-11 is modified (N6-acetyllysine). Residue Ser-26 is modified to Phosphoserine. Catalysis depends on residues His-121 and Cys-163. Cys-163 bears the S-nitrosocysteine; in inhibited form mark.

It belongs to the peptidase C14A family. In terms of assembly, heterotetramer that consists of two anti-parallel arranged heterodimers, each one formed by a 17 kDa (p17) and a 12 kDa (p12) subunit. Interacts with BIRC6/bruce. In terms of processing, cleavage by granzyme B, caspase-6, caspase-8 and caspase-10 generates the two active subunits. Additional processing of the propeptides is likely due to the autocatalytic activity of the activated protease. Active heterodimers between the small subunit of caspase-7 protease and the large subunit of caspase-3 also occur and vice versa. Post-translationally, S-nitrosylated on its catalytic site cysteine in unstimulated cell lines and denitrosylated upon activation of the Fas apoptotic pathway, associated with an increase in intracellular caspase activity. Fas therefore activates caspase-3 not only by inducing the cleavage of the caspase zymogen to its active subunits, but also by stimulating the denitrosylation of its active site thiol. Ubiquitinated by BIRC6; this activity is inhibited by DIABLO/SMAC.

The protein localises to the cytoplasm. The enzyme catalyses Strict requirement for an Asp residue at positions P1 and P4. It has a preferred cleavage sequence of Asp-Xaa-Xaa-Asp-|- with a hydrophobic amino-acid residue at P2 and a hydrophilic amino-acid residue at P3, although Val or Ala are also accepted at this position.. Inhibited by BIRC6; following inhibition of BIRC6-caspase binding by DIABLO/SMAC, BIRC6 is subjected to caspase cleavage, leading to an increase in active caspases. In terms of biological role, involved in the activation cascade of caspases responsible for apoptosis execution. At the onset of apoptosis, it proteolytically cleaves poly(ADP-ribose) polymerase PARP1 at a '216-Asp-|-Gly-217' bond. Cleaves and activates sterol regulatory element binding proteins (SREBPs) between the basic helix-loop-helix leucine zipper domain and the membrane attachment domain. Cleaves and activates caspase-6, -7 and -9 (CASP6, CASP7 and CASP9, respectively). Cleaves and inactivates interleukin-18 (IL18). Triggers cell adhesion in sympathetic neurons through RET cleavage. Cleaves IL-1 beta between an Asp and an Ala, releasing the mature cytokine which is involved in a variety of inflammatory processes. Cleaves and inhibits serine/threonine-protein kinase AKT1 in response to oxidative stress. Acts as an inhibitor of type I interferon production during virus-induced apoptosis by mediating cleavage of antiviral proteins CGAS, IRF3 and MAVS, thereby preventing cytokine overproduction. Also involved in pyroptosis by mediating cleavage and activation of gasdermin-E (GSDME). Cleaves XRCC4 and phospholipid scramblase proteins XKR4, XKR8 and XKR9, leading to promote phosphatidylserine exposure on apoptotic cell surface. Cleaves BIRC6 following inhibition of BIRC6-caspase binding by DIABLO/SMAC. The chain is Caspase-3 (CASP3) from Felis catus (Cat).